The sequence spans 297 residues: Craniofacial development protein 1 (297 aa).

Acidic residues-rich tracts occupy residues M1 to Y18, Y25 to E43, and L70 to E79. 2 disordered regions span residues M1–E157 and F190–M222. A phosphoserine mark is found at S81, S84, and S85. The segment covering K97–E111 has biased composition (basic and acidic residues). Phosphoserine is present on S115. Composition is skewed to basic and acidic residues over residues V147–E157 and F190–P199. K148 is covalently cross-linked (Glycyl lysine isopeptide (Lys-Gly) (interchain with G-Cter in SUMO2)). The hydrophilic stretch occupies residues V176–G215. The residue at position 214 (S214) is a Phosphoserine. The region spanning L216–P297 is the BCNT-C domain. K217 carries the N6-methyllysine modification. S248 bears the Phosphoserine mark.

In terms of tissue distribution, brain.

In terms of biological role, may play a role during embryogenesis. This is Craniofacial development protein 1 (CFDP1) from Bos taurus (Bovine).